A 420-amino-acid polypeptide reads, in one-letter code: Gamma-glutamyl phosphate reductase (420 aa).

This sequence belongs to the gamma-glutamyl phosphate reductase family.

It is found in the cytoplasm. It catalyses the reaction L-glutamate 5-semialdehyde + phosphate + NADP(+) = L-glutamyl 5-phosphate + NADPH + H(+). The protein operates within amino-acid biosynthesis; L-proline biosynthesis; L-glutamate 5-semialdehyde from L-glutamate: step 2/2. Functionally, catalyzes the NADPH-dependent reduction of L-glutamate 5-phosphate into L-glutamate 5-semialdehyde and phosphate. The product spontaneously undergoes cyclization to form 1-pyrroline-5-carboxylate. The protein is Gamma-glutamyl phosphate reductase of Cereibacter sphaeroides (strain ATCC 17023 / DSM 158 / JCM 6121 / CCUG 31486 / LMG 2827 / NBRC 12203 / NCIMB 8253 / ATH 2.4.1.) (Rhodobacter sphaeroides).